A 176-amino-acid polypeptide reads, in one-letter code: MLVPPINLHAWVEQHRHLLKPPVGNKCIQQDGFIIMIVGGPNARTDYHYDEGPEWFFQLEGEMVLKVQDDGTARDIPIRAGEIFLLPPKVPHSPQRAAGSIGLVIERERLPHEQDGLQWYCPQCNHKLYEAMFPLENIETDFPPVFDHFYRSLALRTCTQCGHVHPAPERYAAVEA.

Arginine 44 serves as a coordination point for O2. Residues histidine 48, glutamate 54, and histidine 92 each coordinate Fe cation. Residue glutamate 54 participates in substrate binding. Residues arginine 96 and glutamate 106 each contribute to the substrate site. Residues cysteine 121, cysteine 124, cysteine 158, and cysteine 161 each contribute to the Fe cation site.

The protein belongs to the 3-HAO family. In terms of assembly, homodimer. The cofactor is Fe(2+).

The catalysed reaction is 3-hydroxyanthranilate + O2 = (2Z,4Z)-2-amino-3-carboxymuconate 6-semialdehyde. It participates in cofactor biosynthesis; NAD(+) biosynthesis; quinolinate from L-kynurenine: step 3/3. Catalyzes the oxidative ring opening of 3-hydroxyanthranilate to 2-amino-3-carboxymuconate semialdehyde, which spontaneously cyclizes to quinolinate. The chain is 3-hydroxyanthranilate 3,4-dioxygenase from Xanthomonas campestris pv. campestris (strain 8004).